Consider the following 320-residue polypeptide: TATA box-binding protein-like 2 (320 aa).

Belongs to the TBP family. In terms of tissue distribution, expression is restricted to the gonads, and is higher in the ovary than the testis.

It is found in the nucleus. TATA box-binding transcription factor. Members of the TBP family are differentially required to regulate transcription and development during early embryogenesis. Required for gastrulation. Regulates a large subset of genes that are ventrally expressed. Binds to a subset of promoters. This Xenopus laevis (African clawed frog) protein is TATA box-binding protein-like 2.